We begin with the raw amino-acid sequence, 229 residues long: 2-C-methyl-D-erythritol 4-phosphate cytidylyltransferase (229 aa).

It belongs to the IspD/TarI cytidylyltransferase family. IspD subfamily.

It carries out the reaction 2-C-methyl-D-erythritol 4-phosphate + CTP + H(+) = 4-CDP-2-C-methyl-D-erythritol + diphosphate. Its pathway is isoprenoid biosynthesis; isopentenyl diphosphate biosynthesis via DXP pathway; isopentenyl diphosphate from 1-deoxy-D-xylulose 5-phosphate: step 2/6. Its function is as follows. Catalyzes the formation of 4-diphosphocytidyl-2-C-methyl-D-erythritol from CTP and 2-C-methyl-D-erythritol 4-phosphate (MEP). The sequence is that of 2-C-methyl-D-erythritol 4-phosphate cytidylyltransferase from Neisseria meningitidis serogroup A / serotype 4A (strain DSM 15465 / Z2491).